The chain runs to 260 residues: Metallo-beta-lactamase domain-containing protein 1 (260 aa).

His118, His120, Asp122, His123, His173, Asp196, and His235 together coordinate Zn(2+).

The protein belongs to the metallo-beta-lactamase superfamily. Glyoxalase II family. As to quaternary structure, homodimer. Zn(2+) serves as cofactor.

The protein resides in the cytoplasm. The protein localises to the cytosol. Its subcellular location is the nucleus. The enzyme catalyses a ribonucleotidyl-ribonucleotide-RNA + H2O = a 3'-end ribonucleotide-RNA + a 5'-end 5'-phospho-ribonucleoside-RNA + H(+). In terms of biological role, endoribonuclease that catalyzes the hydrolysis of histone-coding pre-mRNA 3'-end. Involved in histone pre-mRNA processing during the S-phase of the cell cycle, which is required for entering/progressing through S-phase. Cleaves histone pre-mRNA at a major and a minor cleavage site after the 5'-ACCCA-3' and the 5'-ACCCACA-3' sequence, respectively, and located downstream of the stem-loop. May require the presence of the HDE element located at the histone pre-RNA 3'-end to avoid non-specific cleavage. The chain is Metallo-beta-lactamase domain-containing protein 1 from Mus musculus (Mouse).